The chain runs to 357 residues: Cyclin-Y (357 aa).

Over residues 1–13 the composition is skewed to polar residues; that stretch reads MGNSSCCLRTRSS. The segment at 1 to 23 is disordered; it reads MGNSSCCLRTRSSSGEDKSYNND. Positions 186–284 constitute a Cyclin N-terminal domain; sequence PDHRNIYRFV…RFLECLDFNI (99 aa).

It belongs to the cyclin family. Interacts with pct-1; the interaction is required to activate pct-1.

The protein resides in the cytoplasm. It is found in the cell projection. Its subcellular location is the dendrite. The protein localises to the axon. Its function is as follows. In association with pct-1, regulates the trafficking of synaptic vesicle precursors in DA motor neurons by promoting anterograde trafficking to the axon and preventing dynein-dependent trafficking to the dendrite. May also regulate synaptic vesicle trafficking in DD motor neurons and in RIA interneurons. Involved in synapse formation during DD motor neuron remodeling by disassembling ventral presynaptic structures. May activate cdk-5. The sequence is that of Cyclin-Y from Caenorhabditis elegans.